We begin with the raw amino-acid sequence, 166 residues long: Endoribonuclease YbeY (166 aa).

The Zn(2+) site is built by H132, H136, and H142.

The protein belongs to the endoribonuclease YbeY family. The cofactor is Zn(2+).

The protein localises to the cytoplasm. Single strand-specific metallo-endoribonuclease involved in late-stage 70S ribosome quality control and in maturation of the 3' terminus of the 16S rRNA. The chain is Endoribonuclease YbeY from Clostridium botulinum (strain Eklund 17B / Type B).